A 228-amino-acid chain; its full sequence is uncharacterized protein (228 aa).

This is an uncharacterized protein from Rickettsia prowazekii (strain Madrid E).